The chain runs to 1394 residues: DNA-directed RNA polymerase subunit beta' (1394 aa).

Zn(2+) contacts are provided by Cys-71, Cys-73, Cys-86, and Cys-89. 3 residues coordinate Mg(2+): Asp-462, Asp-464, and Asp-466. Positions 810, 884, 891, and 894 each coordinate Zn(2+).

It belongs to the RNA polymerase beta' chain family. In terms of assembly, the RNAP catalytic core consists of 2 alpha, 1 beta, 1 beta' and 1 omega subunit. When a sigma factor is associated with the core the holoenzyme is formed, which can initiate transcription. Mg(2+) is required as a cofactor. It depends on Zn(2+) as a cofactor.

The enzyme catalyses RNA(n) + a ribonucleoside 5'-triphosphate = RNA(n+1) + diphosphate. In terms of biological role, DNA-dependent RNA polymerase catalyzes the transcription of DNA into RNA using the four ribonucleoside triphosphates as substrates. In Caulobacter sp. (strain K31), this protein is DNA-directed RNA polymerase subunit beta'.